The sequence spans 253 residues: Chromosome-partitioning ATPase Soj (253 aa).

Residues Lys-11, Gly-12, Gly-13, Val-14, Gly-15, Lys-16, Thr-17, Thr-18, Pro-211, and Asn-213 each coordinate ATP. Thr-17 contributes to the Mg(2+) binding site.

Belongs to the ParA family.

The enzyme catalyses ATP + H2O = ADP + phosphate + H(+). In terms of biological role, ATPase probably involved in chromosome partitioning. Cooperatively binds dsDNA, forming nucleoprotein filaments in a strictly ATP-dependent fashion. The sequence is that of Chromosome-partitioning ATPase Soj from Treponema pallidum (strain Nichols).